The following is a 202-amino-acid chain: Dephospho-CoA kinase (202 aa).

Residues 3 to 202 (IFGLTGGIGS…ISHRSKYLSC (200 aa)) form the DPCK domain. 11-16 (GSGKSL) contributes to the ATP binding site.

This sequence belongs to the CoaE family.

It is found in the cytoplasm. The catalysed reaction is 3'-dephospho-CoA + ATP = ADP + CoA + H(+). The protein operates within cofactor biosynthesis; coenzyme A biosynthesis; CoA from (R)-pantothenate: step 5/5. Catalyzes the phosphorylation of the 3'-hydroxyl group of dephosphocoenzyme A to form coenzyme A. This is Dephospho-CoA kinase from Ehrlichia chaffeensis (strain ATCC CRL-10679 / Arkansas).